A 189-amino-acid polypeptide reads, in one-letter code: Peptidyl-tRNA hydrolase (189 aa).

Residue tyrosine 15 participates in tRNA binding. Histidine 20 acts as the Proton acceptor in catalysis. The tRNA site is built by phenylalanine 66, asparagine 68, and asparagine 114.

Belongs to the PTH family. As to quaternary structure, monomer.

It localises to the cytoplasm. The enzyme catalyses an N-acyl-L-alpha-aminoacyl-tRNA + H2O = an N-acyl-L-amino acid + a tRNA + H(+). Hydrolyzes ribosome-free peptidyl-tRNAs (with 1 or more amino acids incorporated), which drop off the ribosome during protein synthesis, or as a result of ribosome stalling. In terms of biological role, catalyzes the release of premature peptidyl moieties from peptidyl-tRNA molecules trapped in stalled 50S ribosomal subunits, and thus maintains levels of free tRNAs and 50S ribosomes. The chain is Peptidyl-tRNA hydrolase from Streptococcus thermophilus (strain CNRZ 1066).